We begin with the raw amino-acid sequence, 147 residues long: Hemoglobin subunit epsilon (147 aa).

Residues 3–147 (HWSAEEKQLI…VAHALARKYH (145 aa)) enclose the Globin domain. His-64 and His-93 together coordinate heme b.

It belongs to the globin family. In terms of assembly, heterotetramer of two epsilon chains and two alpha chains. Hemoglobin E (Hbe) contains a alpha-A chains while hemoglobin M (Hbm) contains alpha-D chains.

Its function is as follows. Beta-type chain found in early embryos. This Gallus gallus (Chicken) protein is Hemoglobin subunit epsilon (HBE).